Here is a 200-residue protein sequence, read N- to C-terminus: NADH-quinone oxidoreductase subunit C (200 aa).

It belongs to the complex I 30 kDa subunit family. In terms of assembly, NDH-1 is composed of 14 different subunits. Subunits NuoB, C, D, E, F, and G constitute the peripheral sector of the complex.

It is found in the cell inner membrane. The enzyme catalyses a quinone + NADH + 5 H(+)(in) = a quinol + NAD(+) + 4 H(+)(out). NDH-1 shuttles electrons from NADH, via FMN and iron-sulfur (Fe-S) centers, to quinones in the respiratory chain. The immediate electron acceptor for the enzyme in this species is believed to be ubiquinone. Couples the redox reaction to proton translocation (for every two electrons transferred, four hydrogen ions are translocated across the cytoplasmic membrane), and thus conserves the redox energy in a proton gradient. The sequence is that of NADH-quinone oxidoreductase subunit C from Maricaulis maris (strain MCS10) (Caulobacter maris).